We begin with the raw amino-acid sequence, 269 residues long: Tryptophan synthase alpha chain (269 aa).

Catalysis depends on proton acceptor residues glutamate 49 and aspartate 60.

The protein belongs to the TrpA family. Tetramer of two alpha and two beta chains.

The catalysed reaction is (1S,2R)-1-C-(indol-3-yl)glycerol 3-phosphate + L-serine = D-glyceraldehyde 3-phosphate + L-tryptophan + H2O. The protein operates within amino-acid biosynthesis; L-tryptophan biosynthesis; L-tryptophan from chorismate: step 5/5. Functionally, the alpha subunit is responsible for the aldol cleavage of indoleglycerol phosphate to indole and glyceraldehyde 3-phosphate. This chain is Tryptophan synthase alpha chain, found in Pseudomonas putida (strain W619).